A 418-amino-acid chain; its full sequence is UDP-N-acetylglucosamine 1-carboxyvinyltransferase (418 aa).

22 to 23 (KN) lines the phosphoenolpyruvate pocket. A UDP-N-acetyl-alpha-D-glucosamine-binding site is contributed by R93. Catalysis depends on C117, which acts as the Proton donor. Residue C117 is modified to 2-(S-cysteinyl)pyruvic acid O-phosphothioketal. Residues 122–126 (RPIDL), D306, and L328 each bind UDP-N-acetyl-alpha-D-glucosamine.

Belongs to the EPSP synthase family. MurA subfamily.

The protein localises to the cytoplasm. It catalyses the reaction phosphoenolpyruvate + UDP-N-acetyl-alpha-D-glucosamine = UDP-N-acetyl-3-O-(1-carboxyvinyl)-alpha-D-glucosamine + phosphate. It functions in the pathway cell wall biogenesis; peptidoglycan biosynthesis. In terms of biological role, cell wall formation. Adds enolpyruvyl to UDP-N-acetylglucosamine. The polypeptide is UDP-N-acetylglucosamine 1-carboxyvinyltransferase (Campylobacter hominis (strain ATCC BAA-381 / DSM 21671 / CCUG 45161 / LMG 19568 / NCTC 13146 / CH001A)).